Reading from the N-terminus, the 567-residue chain is Proline--tRNA ligase (567 aa).

It belongs to the class-II aminoacyl-tRNA synthetase family. ProS type 1 subfamily. Homodimer.

The protein resides in the cytoplasm. The catalysed reaction is tRNA(Pro) + L-proline + ATP = L-prolyl-tRNA(Pro) + AMP + diphosphate. In terms of biological role, catalyzes the attachment of proline to tRNA(Pro) in a two-step reaction: proline is first activated by ATP to form Pro-AMP and then transferred to the acceptor end of tRNA(Pro). As ProRS can inadvertently accommodate and process non-cognate amino acids such as alanine and cysteine, to avoid such errors it has two additional distinct editing activities against alanine. One activity is designated as 'pretransfer' editing and involves the tRNA(Pro)-independent hydrolysis of activated Ala-AMP. The other activity is designated 'posttransfer' editing and involves deacylation of mischarged Ala-tRNA(Pro). The misacylated Cys-tRNA(Pro) is not edited by ProRS. The sequence is that of Proline--tRNA ligase from Staphylococcus aureus (strain COL).